The chain runs to 151 residues: Protein Turandot Z (151 aa).

The first 23 residues, 1 to 23 (MSRLIHLSFVLALLACLTGPISA), serve as a signal peptide directing secretion.

The protein belongs to the Turandot family.

It localises to the secreted. A humoral factor that may play a role in stress tolerance. In Drosophila pseudoobscura pseudoobscura (Fruit fly), this protein is Protein Turandot Z.